The following is a 230-amino-acid chain: N-(5'-phosphoribosyl)anthranilate isomerase (230 aa).

This sequence belongs to the TrpF family.

It carries out the reaction N-(5-phospho-beta-D-ribosyl)anthranilate = 1-(2-carboxyphenylamino)-1-deoxy-D-ribulose 5-phosphate. It participates in amino-acid biosynthesis; L-tryptophan biosynthesis; L-tryptophan from chorismate: step 3/5. In Trichodesmium erythraeum (strain IMS101), this protein is N-(5'-phosphoribosyl)anthranilate isomerase.